The primary structure comprises 838 residues: E3 ubiquitin-protein ligase RNF19A (838 aa).

The segment at 128-351 (DFIECPLCLL…LSPSGCTFWG (224 aa)) is TRIAD supradomain. The Zn(2+) site is built by Cys132, Cys135, Cys150, His152, Cys155, Cys158, Cys176, Cys179, Cys219, Cys224, Cys241, Cys246, Cys251, Cys254, His259, Cys264, Cys301, and Cys304. The RING-type 1 zinc finger occupies 132-179 (CPLCLLRHSKDRFPEIMTCHHRSCVDCLRQYLRIEISESRVNISCPEC). An IBR-type zinc finger spans residues 199-264 (EKYEEFMLRR…KQIWHPNQTC (66 aa)). The RING-type 2; atypical zinc finger occupies 301–332 (CPRCAAYIIKMNDGSCNHMTCAVCGCEFCWLC). The active site involves Cys316. 6 residues coordinate Zn(2+): Cys321, Cys324, Cys329, Cys332, His340, and Cys347. The next 2 membrane-spanning stretches (helical) occupy residues 368–388 (LVGA…AMII) and 424–444 (VIVS…IMLA). 2 disordered regions span residues 622 to 685 (SKPS…SNMK) and 700 to 721 (QQST…PSVA). Position 631 is a phosphoserine (Ser631). The segment covering 631–644 (SGSSSVDDGSAARS) has biased composition (low complexity). The interval 660 to 838 (ATKWSKEATA…ELKVAIQTDI (179 aa)) is interaction with CASR. Residues 671–683 (KKSKSGKLRKKSN) show a composition bias toward basic residues. Positions 700 to 717 (QQSTNSSEFEAPSLSDSM) are enriched in polar residues.

This sequence belongs to the RBR family. RNF19 subfamily. As to quaternary structure, interacts with UBE2L3 and UBE2L6. Also interacts with transcription factor Sp1. Interacts with SNCAIP, CASR and VCP.

It is found in the membrane. Its subcellular location is the cytoplasm. The protein resides in the cytoskeleton. The protein localises to the microtubule organizing center. It localises to the centrosome. It catalyses the reaction [E2 ubiquitin-conjugating enzyme]-S-ubiquitinyl-L-cysteine + [acceptor protein]-L-lysine = [E2 ubiquitin-conjugating enzyme]-L-cysteine + [acceptor protein]-N(6)-ubiquitinyl-L-lysine.. The protein operates within protein modification; protein ubiquitination. Functionally, E3 ubiquitin-protein ligase which accepts ubiquitin from E2 ubiquitin-conjugating enzymes UBE2L3 and UBE2L6 in the form of a thioester and then directly transfers the ubiquitin to targeted substrates, such as SNCAIP or CASR. This chain is E3 ubiquitin-protein ligase RNF19A (RNF19A), found in Sus scrofa (Pig).